A 120-amino-acid polypeptide reads, in one-letter code: Large ribosomal subunit protein uL18 (120 aa).

This sequence belongs to the universal ribosomal protein uL18 family. Part of the 50S ribosomal subunit; part of the 5S rRNA/L5/L18/L25 subcomplex. Contacts the 5S and 23S rRNAs.

This is one of the proteins that bind and probably mediate the attachment of the 5S RNA into the large ribosomal subunit, where it forms part of the central protuberance. The polypeptide is Large ribosomal subunit protein uL18 (Bordetella bronchiseptica (strain ATCC BAA-588 / NCTC 13252 / RB50) (Alcaligenes bronchisepticus)).